The chain runs to 600 residues: Long-chain-fatty-acid--CoA ligase FadD15 (600 aa).

This sequence belongs to the ATP-dependent AMP-binding enzyme family.

The enzyme catalyses a long-chain fatty acid + ATP + CoA = a long-chain fatty acyl-CoA + AMP + diphosphate. The catalysed reaction is dodecanoate + ATP + CoA = dodecanoyl-CoA + AMP + diphosphate. It carries out the reaction hexadecanoate + ATP + CoA = hexadecanoyl-CoA + AMP + diphosphate. It participates in lipid metabolism; fatty acid biosynthesis. Catalyzes the activation of long-chain fatty acids as acyl-coenzyme A (acyl-CoA), which are then transferred to the multifunctional polyketide synthase (PKS) type III for further chain extension. The chain is Long-chain-fatty-acid--CoA ligase FadD15 (fadD15) from Mycobacterium tuberculosis (strain ATCC 25618 / H37Rv).